A 289-amino-acid polypeptide reads, in one-letter code: UPF0173 metal-dependent hydrolase H16_A2129 (289 aa).

The protein belongs to the UPF0173 family.

This is UPF0173 metal-dependent hydrolase H16_A2129 from Cupriavidus necator (strain ATCC 17699 / DSM 428 / KCTC 22496 / NCIMB 10442 / H16 / Stanier 337) (Ralstonia eutropha).